The primary structure comprises 203 residues: Undecaprenyl phosphate transporter A (203 aa).

Helical transmembrane passes span Ala16–Leu36, Leu48–Leu68, Tyr108–Ile128, Val137–Leu157, and Leu173–Ile193.

It belongs to the DedA family.

It is found in the cell membrane. Flippase that catalyzes the transport of undecaprenyl phosphate (UndP) across the cytoplasmic membrane, from the external side to the cytoplasmic side. Is involved in UndP recycling during peptidoglycan synthesis. The chain is Undecaprenyl phosphate transporter A from Staphylococcus aureus (strain NCTC 8325 / PS 47).